The primary structure comprises 246 residues: Probable transcriptional regulatory protein CLK_2466 (246 aa).

Belongs to the TACO1 family.

It localises to the cytoplasm. The chain is Probable transcriptional regulatory protein CLK_2466 from Clostridium botulinum (strain Loch Maree / Type A3).